Reading from the N-terminus, the 247-residue chain is tRNA pseudouridine synthase A (247 aa).

Aspartate 53 (nucleophile) is an active-site residue. Tyrosine 111 serves as a coordination point for substrate.

Belongs to the tRNA pseudouridine synthase TruA family. As to quaternary structure, homodimer.

It catalyses the reaction uridine(38/39/40) in tRNA = pseudouridine(38/39/40) in tRNA. Its function is as follows. Formation of pseudouridine at positions 38, 39 and 40 in the anticodon stem and loop of transfer RNAs. The polypeptide is tRNA pseudouridine synthase A (Bacillus pumilus (strain SAFR-032)).